A 349-amino-acid polypeptide reads, in one-letter code: 4-hydroxy-2-oxovalerate aldolase 2 (349 aa).

Residues 12-264 enclose the Pyruvate carboxyltransferase domain; sequence VRMTDTSLRD…KTGIDFFDIA (253 aa). 20–21 contacts substrate; it reads RD. Aspartate 21 is a binding site for Mn(2+). Histidine 24 functions as the Proton acceptor in the catalytic mechanism. Residues serine 174 and histidine 203 each coordinate substrate. Positions 203 and 205 each coordinate Mn(2+). Tyrosine 294 is a substrate binding site.

This sequence belongs to the 4-hydroxy-2-oxovalerate aldolase family.

The enzyme catalyses (S)-4-hydroxy-2-oxopentanoate = acetaldehyde + pyruvate. This is 4-hydroxy-2-oxovalerate aldolase 2 (bphI-2) from Mycolicibacterium smegmatis (strain ATCC 700084 / mc(2)155) (Mycobacterium smegmatis).